The primary structure comprises 304 residues: Protease HtpX homolog 1 (304 aa).

2 helical membrane-spanning segments follow: residues 17–37 (VTLF…IALL) and 39–59 (SWVL…WFSD). Residue His140 coordinates Zn(2+). Residue Glu141 is part of the active site. Residue His144 participates in Zn(2+) binding. The next 2 membrane-spanning stretches (helical) occupy residues 151-171 (AVIT…RFAF) and 186-206 (AVLA…FLLI). Residue Glu214 coordinates Zn(2+).

It belongs to the peptidase M48B family. Zn(2+) serves as cofactor.

The protein localises to the cell membrane. The polypeptide is Protease HtpX homolog 1 (Streptomyces coelicolor (strain ATCC BAA-471 / A3(2) / M145)).